The primary structure comprises 291 residues: Putative fatty acid elongase 4 (291 aa).

The next 3 membrane-spanning stretches (helical) occupy residues 46–66 (ILFQKYWYHSITISVLYFILI), 79–99 (FTLKYPLILWNGALAAFSIIA), and 254–274 (NLYLAFVIYVTFAILFIQFFV).

It belongs to the ELO family.

It is found in the membrane. It catalyses the reaction a very-long-chain acyl-CoA + malonyl-CoA + H(+) = a very-long-chain 3-oxoacyl-CoA + CO2 + CoA. The protein operates within lipid metabolism; fatty acid biosynthesis. Functionally, could be implicated in synthesis of very long chain fatty acids. This chain is Putative fatty acid elongase 4 (elo-4), found in Caenorhabditis elegans.